A 309-amino-acid chain; its full sequence is Olfactory receptor 8A1 (309 aa).

At 1–28 (MTAENQSTVTEFILGGLTNRPELQLPLF) the chain is on the extracellular side. The helical transmembrane segment at 29-49 (LLFLGIYVVTMVGNLGMITLI) threads the bilayer. The Cytoplasmic segment spans residues 50–56 (GLNSQLH). The helical transmembrane segment at 57 to 77 (TPMYFFLSNLSLVDLCYSSVI) threads the bilayer. The Extracellular portion of the chain corresponds to 78-90 (TPKMLINFVSQRN). The helical transmembrane segment at 91–111 (LISYVGCMSQLYFFLVFVIAE) threads the bilayer. A disulfide bond links Cys97 and Cys188. At 112-133 (CYMLTVMAYDRYVAICQPLLYN) the chain is on the cytoplasmic side. Residues 134–154 (IIMSPALCSLLVAFVYAVGLI) traverse the membrane as a helical segment. Over 155-195 (GSAIETGLMLKLNYCEDLISHYFCDILPLMKLSCSSTYDVE) the chain is Extracellular. Residues 196–216 (MAVFFLAGFDIIVTSLTVLIS) form a helical membrane-spanning segment. The Cytoplasmic segment spans residues 217–238 (YAFILSSILRISSNEGRSKAFS). A helical membrane pass occupies residues 239 to 259 (TCSSHFAAVGLFYGSTAFMYL). The Extracellular segment spans residues 260–270 (KPSTASSLAQE). Residues 271-291 (NVASVFYTTVIPMFNPLIYSL) form a helical membrane-spanning segment. Residues 292-309 (RNKEVKTALDKTLRRKVF) lie on the Cytoplasmic side of the membrane.

It belongs to the G-protein coupled receptor 1 family.

It is found in the cell membrane. Functionally, odorant receptor. The protein is Olfactory receptor 8A1 of Mus musculus (Mouse).